The primary structure comprises 275 residues: Vitamin B12-binding protein (275 aa).

A signal peptide spans 1 to 19 (MMNKICLYLPLFFSSLTMA). In terms of domain architecture, Fe/B12 periplasmic-binding spans 25–272 (RVISLAPHAT…EVCEHFESVK (248 aa)). A disulfide bond links Cys-185 and Cys-265.

The protein belongs to the BtuF family. In terms of assembly, the complex is composed of two ATP-binding proteins (BtuD), two transmembrane proteins (BtuC) and a solute-binding protein (BtuF).

It is found in the periplasm. Functionally, part of the ABC transporter complex BtuCDF involved in vitamin B12 import. Binds vitamin B12 and delivers it to the periplasmic surface of BtuC. The protein is Vitamin B12-binding protein of Vibrio parahaemolyticus serotype O3:K6 (strain RIMD 2210633).